Reading from the N-terminus, the 643-residue chain is Pescadillo homolog (643 aa).

The segment covering 305–323 has biased composition (basic and acidic residues); the sequence is EKTKEKNHKSDNNPHEHTT. Positions 305 to 329 are disordered; it reads EKTKEKNHKSDNNPHEHTTNIDNNN. The BRCT domain occupies 378-474; it reads KLKELFKNHI…NILPCSDYLT (97 aa). Positions 531–615 form a coiled coil; the sequence is NYKEEEEEEN…IVLSKKKRKL (85 aa).

This sequence belongs to the pescadillo family. As to quaternary structure, interacts with dual specificity protein phosphatase YVH1.

It localises to the nucleus. Its subcellular location is the nucleolus. The protein resides in the nucleoplasm. In terms of biological role, required for maturation of ribosomal RNAs and formation of the large ribosomal subunit. The polypeptide is Pescadillo homolog (Plasmodium falciparum (isolate 3D7)).